A 674-amino-acid polypeptide reads, in one-letter code: MAQAYWQCYPWLVLLCACAWSYPEPKYLGREDVRNCSTSPERLPVTAVNTTMRLAALRQQMETWNLSAYIIPDTDAHMSEYIGKPDKRREWISGFTGSAGTAVVTMGKAAVWTDSRYWTQAERQMDCNWELHKEVSISSIVAWILAEVPDGQNVGFDPFLFSVDSWKNYDQGFQDSSRHLLSVTTNLVDVAWGSERPPVPSQPIYALPKEFTGSTWQEKVSAVRSYMEHHAKTPTGVLLSALDETAWLFNLRSSDIPYNPFFYSYALLTNSSIRLFVNKSRFSLETLQYLNTNCTLPMCVQLEDYSQVRDSVKAYASGDVKILIGVSYTTYGVYEVIPKEKLVTDTYSPVMLIKAVKNSKEQALLKSSHVRDAVAVIQYLVWLEKNVPKGTVDEFSGAEYIDELRRNENFSSGPSFETISASGLNAALAHYSPTKELHRKLSSDEMYLVDSGGQYWDGTTDITRTVHWGTPTAFQKEAYTRVLMGNIDLSRLVFPAATSGRVIEAFARRALWEVGLNYGHGTGHGIGNFLCVHEWPVGFQYNNIAMAKGMFTSIEPGYYHDGEFGIRLEDVALVVEAKTKYPGDYLTFELVSFVPYDRNLIDVRLLSPEQLQYLNRYYQTIRENVGPELQRRQLLEEFAWLEQHTEPLSARAPHIISWTSLWVASALAILSWSS.

Positions methionine 1–tyrosine 22 are cleaved as a signal peptide. An N-linked (GlcNAc...) asparagine glycan is attached at asparagine 65. Substrate is bound at residue arginine 116. Residues asparagine 270, asparagine 278, and asparagine 293 are each glycosylated (N-linked (GlcNAc...) asparagine). Histidine 430 provides a ligand contact to substrate. Zn(2+)-binding residues include aspartate 450, aspartate 461, and histidine 524. Positions 524, 533, and 555 each coordinate substrate. Zn(2+) contacts are provided by glutamate 555 and glutamate 569. Alanine 650 is lipidated: GPI-anchor amidated alanine. A propeptide spans arginine 651–serine 674 (removed in mature form).

It belongs to the peptidase M24B family. In terms of assembly, homotrimer. Requires Zn(2+) as cofactor. N-glycosylated. In terms of tissue distribution, strongly expressed in small intestine, heart and lung. Also detected in testis, skeletal muscle, spleen, liver, kidney, brain, uterus, eye, lymph node, thymus, stomach, prostate and bone marrow.

Its subcellular location is the cell membrane. It catalyses the reaction Release of any N-terminal amino acid, including proline, that is linked to proline, even from a dipeptide or tripeptide.. Its function is as follows. Membrane-bound metalloprotease which catalyzes the removal of a penultimate prolyl residue from the N-termini of peptides, such as Arg-Pro-Pro. May play a role in the metabolism of the vasodilator bradykinin. The sequence is that of Xaa-Pro aminopeptidase 2 from Mus musculus (Mouse).